The primary structure comprises 219 residues: Adenylate kinase (219 aa).

13–18 is a binding site for ATP; that stretch reads GAGKGT. Positions 33–62 are NMP; it reads STGDIFRAAIKNETKMGLEAKKYIDAGNLV. AMP is bound by residues Thr-34, Arg-39, 60–62, 88–91, and Gln-95; these read NLV and GYPR. Positions 129 to 167 are LID; sequence GRFICRTCGATYHKLYNKPKVEGTCDVCGGHDFYQRDDD. An ATP-binding site is contributed by Arg-130. Zn(2+) is bound by residues Cys-133 and Cys-136. 139-140 is a binding site for ATP; sequence TY. Zn(2+)-binding residues include Cys-153 and Cys-156. AMP-binding residues include Arg-164 and Arg-175. Residue Arg-203 coordinates ATP.

Belongs to the adenylate kinase family. Monomer.

It localises to the cytoplasm. The enzyme catalyses AMP + ATP = 2 ADP. The protein operates within purine metabolism; AMP biosynthesis via salvage pathway; AMP from ADP: step 1/1. Catalyzes the reversible transfer of the terminal phosphate group between ATP and AMP. Plays an important role in cellular energy homeostasis and in adenine nucleotide metabolism. The protein is Adenylate kinase of Lactiplantibacillus plantarum (strain ATCC BAA-793 / NCIMB 8826 / WCFS1) (Lactobacillus plantarum).